The primary structure comprises 129 residues: NADPH-dependent 7-cyano-7-deazaguanine reductase (129 aa).

Residue Cys34 is the Thioimide intermediate of the active site. The Proton donor role is filled by Asp41. Substrate-binding positions include 56–58 and 75–76; these read VEL and HE.

The protein belongs to the GTP cyclohydrolase I family. QueF type 1 subfamily.

The protein localises to the cytoplasm. The catalysed reaction is 7-aminomethyl-7-carbaguanine + 2 NADP(+) = 7-cyano-7-deazaguanine + 2 NADPH + 3 H(+). The protein operates within tRNA modification; tRNA-queuosine biosynthesis. Catalyzes the NADPH-dependent reduction of 7-cyano-7-deazaguanine (preQ0) to 7-aminomethyl-7-deazaguanine (preQ1). The sequence is that of NADPH-dependent 7-cyano-7-deazaguanine reductase from Alkalilimnicola ehrlichii (strain ATCC BAA-1101 / DSM 17681 / MLHE-1).